The following is an 86-amino-acid chain: Large ribosomal subunit protein bL28 (86 aa).

The protein belongs to the bacterial ribosomal protein bL28 family.

This is Large ribosomal subunit protein bL28 from Bacteroides fragilis (strain ATCC 25285 / DSM 2151 / CCUG 4856 / JCM 11019 / LMG 10263 / NCTC 9343 / Onslow / VPI 2553 / EN-2).